We begin with the raw amino-acid sequence, 144 residues long: MSRHYEVVFLVHPDQSEQVPAMIERYKSLIEGGNGTIHRLEDWGRRQLAYPIQNLVKAHYVLLNIEVDQAVLSELVESFRFNDAVLRHLVIKRDGPDTEQSLIMKSKDEKGDKPERSERRRRDDEEGDAAPAATDTDGDNAEAA.

The interval 97–144 (DTEQSLIMKSKDEKGDKPERSERRRRDDEEGDAAPAATDTDGDNAEAA) is disordered. Residues 105-124 (KSKDEKGDKPERSERRRRDD) show a composition bias toward basic and acidic residues.

This sequence belongs to the bacterial ribosomal protein bS6 family.

Its function is as follows. Binds together with bS18 to 16S ribosomal RNA. The polypeptide is Small ribosomal subunit protein bS6 (Xanthomonas campestris pv. campestris (strain 8004)).